Here is a 426-residue protein sequence, read N- to C-terminus: Enolase (426 aa).

Gln165 is a binding site for (2R)-2-phosphoglycerate. The Proton donor role is filled by Glu209. Residues Asp244, Glu287, and Asp313 each contribute to the Mg(2+) site. Lys338, Arg367, Ser368, and Lys389 together coordinate (2R)-2-phosphoglycerate. Lys338 acts as the Proton acceptor in catalysis.

Belongs to the enolase family. Mg(2+) is required as a cofactor.

It localises to the cytoplasm. It is found in the secreted. The protein localises to the cell surface. It carries out the reaction (2R)-2-phosphoglycerate = phosphoenolpyruvate + H2O. The protein operates within carbohydrate degradation; glycolysis; pyruvate from D-glyceraldehyde 3-phosphate: step 4/5. Functionally, catalyzes the reversible conversion of 2-phosphoglycerate (2-PG) into phosphoenolpyruvate (PEP). It is essential for the degradation of carbohydrates via glycolysis. In Methanococcus maripaludis (strain C7 / ATCC BAA-1331), this protein is Enolase.